A 204-amino-acid chain; its full sequence is Fruiting body protein SC7 (204 aa).

A signal peptide spans 1 to 16; sequence MKLTVILLTAVLAASA. The SCP domain occupies 62-185; it reads LKAHNNERAQ…KTLWYYVCNY (124 aa). Residues Asn80, Asn118, and Asn134 are each glycosylated (N-linked (GlcNAc...) asparagine).

Belongs to the CRISP family.

It localises to the secreted. This chain is Fruiting body protein SC7 (SC7), found in Schizophyllum commune (Split gill fungus).